We begin with the raw amino-acid sequence, 317 residues long: Putative HTH-type transcriptional regulatory protein Mboo_0195 (317 aa).

Residues 132 to 185 (LRELRERRSMSLGDLGQVLGVSRRTISKYESGMGTTLEVAIRIEEYFNTGVVES) form the HTH cro/C1-type domain. A DNA-binding region (H-T-H motif) is located at residues 143–162 (LGDLGQVLGVSRRTISKYES).

The chain is Putative HTH-type transcriptional regulatory protein Mboo_0195 from Methanoregula boonei (strain DSM 21154 / JCM 14090 / 6A8).